The primary structure comprises 365 residues: MLTVGILGGGQLGWMTILEGRKLGFKFHVLEDKENAPACRVADRCFRTGQISEFVDSCDIITYEFEHIKDEVLEKCESKLIPNPQALYVKKSRIREKLFLKKHGFPVPEFLVIKRDEIIDALKSFKLPVVIKAEKLGYDGKGQYRIKKLEDANQVVKNHDKEESFIIEEFVKFEAEISCIGVRDREGKTYFYPQPFNKHEEGILIYNYVPYAKLKEAEEITKRLMELLDIVGVFTVEFFLLKDGRVLINEFAPRVHNTGHWTLDGAYTSQFENLLRAITEMPLGSTELKLPSGMVNILGKSYEEIPLKEILSVEGAKLYWYGKEKKPRRKVGHVNVVGRSKEEVVEKVERVFTLLKGSREKLPAP.

Residues Arg-93, Lys-132, Gly-137–Gln-143, Glu-168–Val-171, Glu-176, His-199, and Asn-249–Glu-250 each bind ATP. An ATP-grasp domain is found at Lys-97–Thr-279.

It belongs to the PurK/PurT family. In terms of assembly, homodimer.

It catalyses the reaction 5-amino-1-(5-phospho-beta-D-ribosyl)imidazole + hydrogencarbonate + ATP = 5-carboxyamino-1-(5-phospho-D-ribosyl)imidazole + ADP + phosphate + 2 H(+). The protein operates within purine metabolism; IMP biosynthesis via de novo pathway; 5-amino-1-(5-phospho-D-ribosyl)imidazole-4-carboxylate from 5-amino-1-(5-phospho-D-ribosyl)imidazole (N5-CAIR route): step 1/2. Catalyzes the ATP-dependent conversion of 5-aminoimidazole ribonucleotide (AIR) and HCO(3)(-) to N5-carboxyaminoimidazole ribonucleotide (N5-CAIR). The sequence is that of N5-carboxyaminoimidazole ribonucleotide synthase from Aquifex aeolicus (strain VF5).